Here is a 132-residue protein sequence, read N- to C-terminus: Agouti-signaling protein (132 aa).

An N-terminal signal peptide occupies residues 1 to 22 (MDVTRLLLATLLVFLCFFTVYS). A glycan (N-linked (GlcNAc...) asparagine) is linked at Asn39. The tract at residues 62–93 (ISRKEAEKKRSSKKEASMKKVAQPRTPLSAPC) is disordered. Residues 63–79 (SRKEAEKKRSSKKEASM) are compositionally biased toward basic and acidic residues. Cystine bridges form between Cys93-Cys108, Cys100-Cys114, Cys107-Cys125, Cys111-Cys132, and Cys116-Cys123. One can recognise an Agouti domain in the interval 93-132 (CVATRDSCKPPAPACCDPCASCQCRFFRSACSCRVLSLNC).

It is found in the secreted. Involved in the regulation of melanogenesis. The binding of ASP to MC1R precludes alpha-MSH initiated signaling and thus blocks production of cAMP, leading to a down-regulation of eumelanogenesis (brown/black pigment) and thus increasing synthesis of pheomelanin (yellow/red pigment). This Trachypithecus auratus (Javan langur) protein is Agouti-signaling protein (ASIP).